An 860-amino-acid polypeptide reads, in one-letter code: MKFSSANKILFSGLVASANAYDLLKDYAGDLKIGVAANAMRFSNSNYVNAMKAFNMMVAENDCKLSGIQQQKGVYNFNGCDNHYNKAKELGMEFRGHCLIWHSYQPSWFQNADANTLKNAIVDHITKTLQHYEGKIKVWDVVNEAIDDNSNGNGWNMRRSFLYNKVPNFVDLAFQTARKVSPNTKLFYNDYNAEGVYAKAESIYNFVSDLKKRNIPIDGVGLQYHVGAKEQPSYNKINDLIGRYCKLGLEVHITELDVKLQGDQNGQSQAFSNALKACLANSCCKAFLVWGVGDNDSWLGANEQALLFNGSYQPKPVYNTLLNILKTSARPASSSAKTLPGNSKSKTLPGVNSKTLPGNKSKTLPGASKTLPGNKSKTLPGGNSNTLPGNKSKTLPGGNSKTLPGNKSRTLPGGNSKTLPGGKSRTLPGGNSKTLPGGKSKTLPGGNSKTLPGGKSKTLPGGNSKTLPGGSSKTLPGGKSKTLPGGNSKTLPGGSSKTLPGGKSKTLPGGSSKTLPGGKSKTLPGGNSKTLPGGNSKTLPGGSSKTLPGGKSKTLPGGNSKTLPGGSSKTLPGGKSKTLPGGNSKTLPGGNSKTLPGGKSKTLPGGNSKTLPGGSSKTLPGGKSKTLPGGSSKTLPGGKSKTLPGGNSKTLPGGNSKTLPGGSSKTLPGGKSKTLPGGSSKTLPGGKSKTLPGGNSKTLPGGKSKTLPGGNSKTLPGGKSKTLPGGNSKTLPGGKSKTLPGGNSKTLPGGSSKTLPGGKSKTLPGGNSKTLPGGKSKTLPGGNTKTLPGGACKPTTVTVTQKVTVTVTVESQPTQGGMNQGGGNCAAKWGQCGGNGFNGPTCCQNGSRCQFVNEWYSQCL.

The first 20 residues, 1-20, serve as a signal peptide directing secretion; that stretch reads MKFSSANKILFSGLVASANA. The 304-residue stretch at 21–324 folds into the GH10 domain; sequence YDLLKDYAGD…KPVYNTLLNI (304 aa). The active-site Proton donor is the E144. Residue E255 is the Nucleophile of the active site. A disulfide bond links C278 and C284. 4 N-linked (GlcNAc...) asparagine glycosylation sites follow: N295, N309, N359, and N374. Composition is skewed to polar residues over residues 330–362 and 371–418; these read RPASSSAKTLPGNSKSKTLPGVNSKTLPGNKSK and LPGN…NSKT. Positions 330–793 are disordered; it reads RPASSSAKTL…TKTLPGGACK (464 aa). Repeat 1 spans residues 375-382; the sequence is KSKTLPGG. The interval 375 to 782 is 47 X 8 AA tandem repeats of [SKN]-S-K-T-L-P-G-G; that stretch reads KSKTLPGGNS…GGKSKTLPGG (408 aa). The N-linked (GlcNAc...) asparagine glycan is linked to N390. Repeat unit 2 spans residues 391–398; that stretch reads KSKTLPGG. N406 is a glycosylation site (N-linked (GlcNAc...) asparagine). 45 consecutive repeat copies span residues 415-422, 431-438, 439-446, 447-454, 455-462, 463-470, 471-478, 479-486, 487-494, 495-502, 503-510, 511-518, 519-526, 527-534, 535-542, 543-550, 551-558, 559-566, 567-574, 575-582, 583-590, 591-598, 599-606, 607-614, 615-622, 623-630, 631-638, 639-646, 647-654, 655-662, 663-670, 671-678, 679-686, 687-694, 695-702, 703-710, 711-718, 719-726, 727-734, 735-742, 743-750, 751-758, 759-766, 767-774, and 775-782. Polar residues-rich tracts occupy residues 461-474 and 485-498; these read GGNSKTLPGGSSKT. Composition is skewed to polar residues over residues 525–546, 557–570, 581–594, and 605–618; these read GGNSKTLPGGNSKTLPGGSSKT, GGNSKTLPGGSSKT, and GGNSKTLPGGNSKT. A compositionally biased stretch (polar residues) spans 645 to 666; the sequence is GGNSKTLPGGNSKTLPGGSSKT. Residues 741–754 show a composition bias toward polar residues; sequence GGNSKTLPGGSSKT. A CBM1 domain is found at 824–860; that stretch reads NCAAKWGQCGGNGFNGPTCCQNGSRCQFVNEWYSQCL. An N-linked (GlcNAc...) asparagine glycan is attached at N845.

The protein belongs to the glycosyl hydrolase 10 (cellulase F) family.

The protein localises to the secreted. It carries out the reaction Endohydrolysis of (1-&gt;4)-beta-D-xylosidic linkages in xylans.. The protein operates within glycan degradation; xylan degradation. Endo-1,4-beta-xylanase involved in the hydrolysis of xylan, a major structural heterogeneous polysaccharide found in plant biomass representing the second most abundant polysaccharide in the biosphere, after cellulose. Hydrolyzes both unsubstituted (oat spelts) and highly substituted (rye and wheat) forms of arabinoxylanslans. The polypeptide is Endo-1,4-beta-xylanase B (xynB) (Neocallimastix patriciarum (Rumen fungus)).